The following is an 86-amino-acid chain: Small ribosomal subunit protein bS20 (86 aa).

A compositionally biased stretch (basic and acidic residues) spans 1 to 16 (MANIKSQEKRIRTNER). Positions 1 to 25 (MANIKSQEKRIRTNERRRLRNQSVK) are disordered.

It belongs to the bacterial ribosomal protein bS20 family.

Its function is as follows. Binds directly to 16S ribosomal RNA. The protein is Small ribosomal subunit protein bS20 of Mycobacterium sp. (strain JLS).